Consider the following 174-residue polypeptide: Large ribosomal subunit protein uL6 (174 aa).

Belongs to the universal ribosomal protein uL6 family. As to quaternary structure, part of the 50S ribosomal subunit.

This protein binds to the 23S rRNA, and is important in its secondary structure. It is located near the subunit interface in the base of the L7/L12 stalk, and near the tRNA binding site of the peptidyltransferase center. The protein is Large ribosomal subunit protein uL6 of Stenotrophomonas maltophilia (strain R551-3).